The sequence spans 73 residues: Small ribosomal subunit protein eS27 (73 aa).

Positions 28, 31, 47, and 50 each coordinate Zn(2+). The segment at 28–50 (CVDCGNEQIIFGNASTEVKCHIC) adopts a C4-type zinc-finger fold.

It belongs to the eukaryotic ribosomal protein eS27 family. As to quaternary structure, part of the 30S ribosomal subunit. Zn(2+) serves as cofactor.

The polypeptide is Small ribosomal subunit protein eS27 (Methanopyrus kandleri (strain AV19 / DSM 6324 / JCM 9639 / NBRC 100938)).